Consider the following 507-residue polypeptide: Arylsulfatase A (507 aa).

The N-terminal stretch at 1 to 18 is a signal peptide; sequence MEALWTLTLALAAGLAAA. Positions 29, 30, and 69 each coordinate Ca(2+). The active-site Nucleophile is the C69. C69 carries the 3-oxoalanine (Cys) modification. K123 lines the substrate pocket. Residue H125 is part of the active site. Residue S150 coordinates substrate. 2 cysteine pairs are disulfide-bonded: C156-C172 and C161-C168. A glycan (N-linked (GlcNAc...) asparagine) is linked at N158. The N-linked (GlcNAc...) asparagine glycan is linked to N184. A substrate-binding site is contributed by H229. D281 and N282 together coordinate Ca(2+). 4 disulfides stabilise this stretch: C300-C414, C488-C500, C489-C502, and C493-C499. K302 contributes to the substrate binding site. N-linked (GlcNAc...) asparagine glycosylation occurs at N350.

The protein belongs to the sulfatase family. As to quaternary structure, homodimer at neutral pH and homooctamer at acidic pH. Exists both as a single chain of 58 kDa (component A) or as a chain of 50 kDa (component B) linked by disulfide bond(s) to a 7 kDa chain (component C). Interacts with SUMF1. The cofactor is Ca(2+). In terms of processing, the conversion to 3-oxoalanine (also known as C-formylglycine, FGly), of a serine or cysteine residue in prokaryotes and of a cysteine residue in eukaryotes, is critical for catalytic activity. This post-translational modification is severely defective in multiple sulfatase deficiency (MSD).

Its subcellular location is the endoplasmic reticulum. It is found in the lysosome. The catalysed reaction is an N-acyl-1-beta-D-(3-O-sulfo)-galactosyl-sphing-4-enine + H2O = a beta-D-galactosyl-(1&lt;-&gt;1')-N-acylsphing-4-enine + sulfate + H(+). Hydrolyzes cerebroside sulfate. The polypeptide is Arylsulfatase A (ARSA) (Bos taurus (Bovine)).